We begin with the raw amino-acid sequence, 304 residues long: Acetylglutamate kinase (304 aa).

Residues 71 to 72, Arg93, and Asn193 each bind substrate; that span reads GG.

Belongs to the acetylglutamate kinase family. ArgB subfamily.

The protein resides in the cytoplasm. It carries out the reaction N-acetyl-L-glutamate + ATP = N-acetyl-L-glutamyl 5-phosphate + ADP. It participates in amino-acid biosynthesis; L-arginine biosynthesis; N(2)-acetyl-L-ornithine from L-glutamate: step 2/4. Catalyzes the ATP-dependent phosphorylation of N-acetyl-L-glutamate. This is Acetylglutamate kinase from Streptomyces avermitilis (strain ATCC 31267 / DSM 46492 / JCM 5070 / NBRC 14893 / NCIMB 12804 / NRRL 8165 / MA-4680).